A 446-amino-acid chain; its full sequence is Glutamate-1-semialdehyde 2,1-aminomutase (446 aa).

At lysine 278 the chain carries N6-(pyridoxal phosphate)lysine.

It belongs to the class-III pyridoxal-phosphate-dependent aminotransferase family. HemL subfamily. As to quaternary structure, homodimer. Pyridoxal 5'-phosphate is required as a cofactor.

It localises to the cytoplasm. It catalyses the reaction (S)-4-amino-5-oxopentanoate = 5-aminolevulinate. The protein operates within porphyrin-containing compound metabolism; protoporphyrin-IX biosynthesis; 5-aminolevulinate from L-glutamyl-tRNA(Glu): step 2/2. The chain is Glutamate-1-semialdehyde 2,1-aminomutase from Deinococcus geothermalis (strain DSM 11300 / CIP 105573 / AG-3a).